A 285-amino-acid polypeptide reads, in one-letter code: Phosphatidylglycerol--prolipoprotein diacylglyceryl transferase (285 aa).

4 consecutive transmembrane segments (helical) span residues 30 to 50 (LEIR…HWHI), 67 to 87 (LMLW…ILLY), 103 to 123 (WHGG…VSIV), and 129 to 149 (VRVM…LFLG). Arg-150 lines the a 1,2-diacyl-sn-glycero-3-phospho-(1'-sn-glycerol) pocket. A run of 3 helical transmembrane segments spans residues 184 to 204 (SQVY…SILA), 213 to 233 (FGVL…AVEF), and 252 to 272 (GQVL…LTVL).

This sequence belongs to the Lgt family.

The protein resides in the cell inner membrane. The enzyme catalyses L-cysteinyl-[prolipoprotein] + a 1,2-diacyl-sn-glycero-3-phospho-(1'-sn-glycerol) = an S-1,2-diacyl-sn-glyceryl-L-cysteinyl-[prolipoprotein] + sn-glycerol 1-phosphate + H(+). It participates in protein modification; lipoprotein biosynthesis (diacylglyceryl transfer). Catalyzes the transfer of the diacylglyceryl group from phosphatidylglycerol to the sulfhydryl group of the N-terminal cysteine of a prolipoprotein, the first step in the formation of mature lipoproteins. This is Phosphatidylglycerol--prolipoprotein diacylglyceryl transferase from Anaplasma marginale (strain Florida).